We begin with the raw amino-acid sequence, 193 residues long: ECF RNA polymerase sigma factor SigK (193 aa).

A sigma-70 factor domain-2 region spans residues Leu35–Glu101. Positions Glu59 to Gln62 match the Polymerase core binding motif. The sigma-70 factor domain-4 stretch occupies residues Met140–Lys187. Residues Tyr161 to Arg180 constitute a DNA-binding region (H-T-H motif).

Belongs to the sigma-70 factor family. ECF subfamily. Interacts transiently with the RNA polymerase catalytic core formed by RpoA, RpoB, RpoC and RpoZ (2 alpha, 1 beta, 1 beta' and 1 omega subunit) to form the RNA polymerase holoenzyme that can initiate transcription. Interacts (via sigma-70 factor domain 4) with anti-sigma-K factor RskA.

In terms of biological role, sigma factors are initiation factors that promote the attachment of RNA polymerase to specific initiation sites and are then released. Extracytoplasmic function (ECF) sigma factors are held in an inactive form by an anti-sigma factor until released by regulated intramembrane proteolysis. The chain is ECF RNA polymerase sigma factor SigK (sigK) from Mycobacterium sp. (strain JLS).